Consider the following 322-residue polypeptide: Ferredoxin--NADP reductase (322 aa).

Residues aspartate 34, glutamine 42, tyrosine 47, valine 87, phenylalanine 120, aspartate 279, and threonine 320 each contribute to the FAD site.

The protein belongs to the ferredoxin--NADP reductase type 2 family. Homodimer. It depends on FAD as a cofactor.

The enzyme catalyses 2 reduced [2Fe-2S]-[ferredoxin] + NADP(+) + H(+) = 2 oxidized [2Fe-2S]-[ferredoxin] + NADPH. The polypeptide is Ferredoxin--NADP reductase (Streptococcus pneumoniae serotype 19F (strain G54)).